The chain runs to 306 residues: MELKDYYAIMGVKPTDDLKTIKTAYRRLARKYHPDVSKEPDAEARFKEVAEAWEVLSDEQRRAEYDQMWQHRNDPQFNRQFHHGDGQSFNAEDFDDIFSSIFGQHARQSRQRPAARGHDIEIEVAVFLEETLTEHKRTISYNLPVYNAFGMIEQEIPKTLNVKIPAGVGNGQRIRLKGQGTPGENGGPNGDLWLVIHIAPHPLFDIVGQDLEIVVPVSPWEAALGAKVTVPTLKESILLTIPPGSQAGQRLRVKGKGLVSKKQTGDLYAVLKIVMPPKPDENTAALWQQLADAQSSFDPRKDWGKA.

The 65-residue stretch at 5-69 (DYYAIMGVKP…QRRAEYDQMW (65 aa)) folds into the J domain.

Its subcellular location is the cytoplasm. The protein localises to the nucleoid. DNA-binding protein that preferentially recognizes a curved DNA sequence. It is probably a functional analog of DnaJ; displays overlapping activities with DnaJ, but functions under different conditions, probably acting as a molecular chaperone in an adaptive response to environmental stresses other than heat shock. Lacks autonomous chaperone activity; binds native substrates and targets them for recognition by DnaK. Its activity is inhibited by the binding of CbpM. The sequence is that of Curved DNA-binding protein from Escherichia coli O8 (strain IAI1).